Consider the following 372-residue polypeptide: Cell division protein FtsZ 1 (372 aa).

Residues 51–55 (GAGCN), 138–140 (GTG), glutamate 169, arginine 173, and aspartate 216 contribute to the GTP site. Positions 350–360 (PEEETPLETPE) are enriched in acidic residues. Residues 350-372 (PEEETPLETPEESPSIEISIPEL) are disordered. Positions 361–372 (ESPSIEISIPEL) are enriched in low complexity.

Belongs to the FtsZ family. Homodimer. Polymerizes to form a dynamic ring structure in a strictly GTP-dependent manner. Interacts directly with several other division proteins.

It is found in the cytoplasm. Its function is as follows. Essential cell division protein that forms a contractile ring structure (Z ring) at the future cell division site. The regulation of the ring assembly controls the timing and the location of cell division. One of the functions of the FtsZ ring is to recruit other cell division proteins to the septum to produce a new cell wall between the dividing cells. Binds GTP and shows GTPase activity. In Pyrococcus furiosus (strain ATCC 43587 / DSM 3638 / JCM 8422 / Vc1), this protein is Cell division protein FtsZ 1.